We begin with the raw amino-acid sequence, 917 residues long: Translation initiation factor IF-2 (917 aa).

Over residues 102–249 (EKSQAEEQAL…KWTAEPKAPE (148 aa)) the composition is skewed to basic and acidic residues. The disordered stretch occupies residues 102–326 (EKSQAEEQAL…KSSTLQQGFH (225 aa)). Over residues 279 to 293 (RRGRTAKAPRAKKNN) the composition is skewed to basic residues. Residues 294-306 (RHSEKADREEARA) show a composition bias toward basic and acidic residues. The region spanning 416–585 (SRAPVVTIMG…LLQAEVLELK (170 aa)) is the tr-type G domain. Residues 425-432 (GHVDHGKT) form a G1 region. GTP is bound at residue 425–432 (GHVDHGKT). The interval 450-454 (GITQH) is G2. Positions 471-474 (DTPG) are G3. GTP is bound by residues 471 to 475 (DTPGH) and 525 to 528 (NKID). Residues 525–528 (NKID) are G4. A G5 region spans residues 561–563 (SAK).

The protein belongs to the TRAFAC class translation factor GTPase superfamily. Classic translation factor GTPase family. IF-2 subfamily.

Its subcellular location is the cytoplasm. Functionally, one of the essential components for the initiation of protein synthesis. Protects formylmethionyl-tRNA from spontaneous hydrolysis and promotes its binding to the 30S ribosomal subunits. Also involved in the hydrolysis of GTP during the formation of the 70S ribosomal complex. The protein is Translation initiation factor IF-2 (infB) of Proteus vulgaris.